A 1474-amino-acid polypeptide reads, in one-letter code: Adhesion G protein-coupled receptor L1 (1474 aa).

The first 24 residues, 1–24 (MARLAAVLWNLCVTAVLVTSATQG), serve as a signal peptide directing secretion. Topologically, residues 25-858 (LSRAGLPFGL…EIYQGRINEL (834 aa)) are extracellular. In terms of domain architecture, SUEL-type lectin spans 40–129 (ACEGYPIELR…KYLEVQYDCV (90 aa)). 5 cysteine pairs are disulfide-bonded: Cys-41–Cys-71, Cys-50–Cys-128, Cys-83–Cys-115, Cys-96–Cys-102, and Cys-140–Cys-322. Glu-42 serves as a coordination point for alpha-L-rhamnose. Asn-98 is a glycosylation site (N-linked (GlcNAc...) asparagine). 117 to 120 (GTYK) serves as a coordination point for alpha-L-rhamnose. The Olfactomedin-like domain maps to 139 to 398 (VCPGTLQKVL…VVRYSLEFGP (260 aa)). The interval 400–434 (DPSAGPATSPPLSTTTTARPTPLTSTASPAATTPL) is disordered. Over residues 405-434 (PATSPPLSTTTTARPTPLTSTASPAATTPL) the composition is skewed to low complexity. 2 cysteine pairs are disulfide-bonded: Cys-480–Cys-515 and Cys-503–Cys-532. N-linked (GlcNAc...) asparagine glycosylation is found at Asn-531, Asn-640, Asn-742, Asn-801, Asn-806, and Asn-827. The region spanning 669-851 (PARFLAAKEN…AVLMAHREIY (183 aa)) is the GAIN-B domain. Intrachain disulfides connect Cys-802-Cys-833 and Cys-821-Cys-835. The tract at residues 802 to 851 (CSFWNYSERSMLGYWSTQGCRLVESNKTHTTCACSHLTNFAVLMAHREIY) is GPS. A helical membrane pass occupies residues 859 to 879 (LLSVITWVGIVISLVCLAICI). The Cytoplasmic segment spans residues 880–893 (STFCFLRGLQTDRN). Residues 894–914 (TIHKNLCINLFLAELLFLVGI) form a helical membrane-spanning segment. The Extracellular segment spans residues 915–920 (DKTQYE). A helical membrane pass occupies residues 921–941 (IACPIFAGLLHYFFLAAFSWL). The Cytoplasmic segment spans residues 942–964 (CLEGVHLYLLLVEVFESEYSRTK). The chain crosses the membrane as a helical span at residues 965 to 985 (YYYLGGYCFPALVVGIAAAID). Over 986 to 1002 (YRSYGTEKACWLRVDNY) the chain is Extracellular. The helical transmembrane segment at 1003–1023 (FIWSFIGPVSFVIVVNLVFLM) threads the bilayer. Topologically, residues 1024 to 1050 (VTLHKMIRSSSVLKPDSSRLDNIKSWA) are cytoplasmic. A helical transmembrane segment spans residues 1051-1071 (LGAIALLFLLGLTWAFGLLFI). The Extracellular portion of the chain corresponds to 1072–1075 (NKES). A helical membrane pass occupies residues 1076 to 1096 (VVMAYLFTTFNAFQGVFIFVF). Residues 1097–1474 (HCALQKKVHK…DGQMQLVTSL (378 aa)) lie on the Cytoplasmic side of the membrane. Arg-1194 is modified (omega-N-methylarginine). Position 1220 is a phosphoserine (Ser-1220). Disordered regions lie at residues 1248–1273 (FNNS…RGRN), 1294–1328 (RGSS…PGGA), 1360–1429 (ESES…SRPP), and 1451–1474 (YLAA…VTSL). Pro residues-rich tracts occupy residues 1302–1314 (GPPP…PPVP) and 1408–1420 (ALPP…PGPP). The residue at position 1473 (Ser-1473) is a Phosphoserine.

It belongs to the G-protein coupled receptor 2 family. Adhesion G-protein coupled receptor (ADGR) subfamily. Forms a heterodimer, consisting of a large extracellular region (p120) non-covalently linked to a seven-transmembrane moiety (p85). Interacts with syntaxin and with proteins of the SHANK family via the PDZ domain. Interacts (via extracellular domain) with FLRT1, FLRT2 and FLRT3 (via extracellular domain). In terms of processing, autoproteolytically cleaved into 2 subunits, an extracellular subunit and a seven-transmembrane subunit. This proteolytic processing takes place early in the biosynthetic pathway, either in the endoplasmic reticulum or in the early compartment of the Golgi apparatus.

It is found in the cell membrane. The protein localises to the cell projection. Its subcellular location is the axon. The protein resides in the growth cone. It localises to the synapse. It is found in the presynaptic cell membrane. The protein localises to the synaptosome. Functionally, calcium-independent receptor of high affinity for alpha-latrotoxin, an excitatory neurotoxin present in black widow spider venom which triggers massive exocytosis from neurons and neuroendocrine cells. Receptor for TENM2 that mediates heterophilic synaptic cell-cell contact and postsynaptic specialization. Receptor probably implicated in the regulation of exocytosis. This chain is Adhesion G protein-coupled receptor L1, found in Homo sapiens (Human).